Here is a 154-residue protein sequence, read N- to C-terminus: Protein-export protein SecB (154 aa).

This sequence belongs to the SecB family. Homotetramer, a dimer of dimers. One homotetramer interacts with 1 SecA dimer.

Its subcellular location is the cytoplasm. Its function is as follows. One of the proteins required for the normal export of preproteins out of the cell cytoplasm. It is a molecular chaperone that binds to a subset of precursor proteins, maintaining them in a translocation-competent state. It also specifically binds to its receptor SecA. The polypeptide is Protein-export protein SecB (Blochmanniella pennsylvanica (strain BPEN)).